The primary structure comprises 400 residues: Formate-dependent phosphoribosylglycinamide formyltransferase (400 aa).

N(1)-(5-phospho-beta-D-ribosyl)glycinamide-binding positions include glutamate 22–leucine 23 and glutamate 82. Residues arginine 115, lysine 156, serine 161–glutamine 166, glutamate 196–isoleucine 199, and glutamate 204 contribute to the ATP site. In terms of domain architecture, ATP-grasp spans arginine 120–leucine 309. Residues glutamate 268 and glutamate 280 each coordinate Mg(2+). N(1)-(5-phospho-beta-D-ribosyl)glycinamide is bound by residues aspartate 287, lysine 361, and arginine 368 to arginine 369.

Belongs to the PurK/PurT family. In terms of assembly, homodimer.

The enzyme catalyses N(1)-(5-phospho-beta-D-ribosyl)glycinamide + formate + ATP = N(2)-formyl-N(1)-(5-phospho-beta-D-ribosyl)glycinamide + ADP + phosphate + H(+). It participates in purine metabolism; IMP biosynthesis via de novo pathway; N(2)-formyl-N(1)-(5-phospho-D-ribosyl)glycinamide from N(1)-(5-phospho-D-ribosyl)glycinamide (formate route): step 1/1. In terms of biological role, involved in the de novo purine biosynthesis. Catalyzes the transfer of formate to 5-phospho-ribosyl-glycinamide (GAR), producing 5-phospho-ribosyl-N-formylglycinamide (FGAR). Formate is provided by PurU via hydrolysis of 10-formyl-tetrahydrofolate. This chain is Formate-dependent phosphoribosylglycinamide formyltransferase, found in Xanthomonas oryzae pv. oryzae (strain KACC10331 / KXO85).